The primary structure comprises 152 residues: SsrA-binding protein (152 aa).

The interval 130-152 (HDKRQDLKQRQDKREMERAMKQR) is disordered. Residues 132–152 (KRQDLKQRQDKREMERAMKQR) show a composition bias toward basic and acidic residues.

Belongs to the SmpB family.

Its subcellular location is the cytoplasm. Its function is as follows. Required for rescue of stalled ribosomes mediated by trans-translation. Binds to transfer-messenger RNA (tmRNA), required for stable association of tmRNA with ribosomes. tmRNA and SmpB together mimic tRNA shape, replacing the anticodon stem-loop with SmpB. tmRNA is encoded by the ssrA gene; the 2 termini fold to resemble tRNA(Ala) and it encodes a 'tag peptide', a short internal open reading frame. During trans-translation Ala-aminoacylated tmRNA acts like a tRNA, entering the A-site of stalled ribosomes, displacing the stalled mRNA. The ribosome then switches to translate the ORF on the tmRNA; the nascent peptide is terminated with the 'tag peptide' encoded by the tmRNA and targeted for degradation. The ribosome is freed to recommence translation, which seems to be the essential function of trans-translation. This is SsrA-binding protein from Thermosynechococcus vestitus (strain NIES-2133 / IAM M-273 / BP-1).